Consider the following 27-residue polypeptide: C-reactive protein P1 (27 aa).

Residues 1–27 (IPQDLSGKMLTFPKEEDDDDVKLMTPK) form a disordered region. In terms of domain architecture, Pentraxin (PTX) spans 6–27 (SGKMLTFPKEEDDDDVKLMTPK).

It belongs to the pentraxin family. As to quaternary structure, homopentamer. Pentraxin (or pentaxin) have a discoid arrangement of 5 non-covalently bound subunits. Exists as a dimer under reducing conditions. The cofactor is Ca(2+). Post-translationally, glycosylated.

The protein resides in the secreted. Functionally, displays several functions associated with host defense: it promotes agglutination, bacterial capsular swelling, phagocytosis, and complement fixation through its calcium-dependent binding to phosphorylcholine. This is C-reactive protein P1 from Gadus morhua (Atlantic cod).